Here is a 380-residue protein sequence, read N- to C-terminus: Putative zinc finger protein C02F5.12 (380 aa).

Residues Asn137–Ala187 are disordered. Polar residues-rich tracts occupy residues Gly142–Ser152 and Asp171–Ala187. The C2H2-type zinc-finger motif lies at Ile271–His294.

It localises to the nucleus. This chain is Putative zinc finger protein C02F5.12, found in Caenorhabditis elegans.